We begin with the raw amino-acid sequence, 270 residues long: 4-hydroxy-tetrahydrodipicolinate reductase (270 aa).

NAD(+)-binding positions include 11 to 16 and glutamate 37; that span reads GAGGRM. Arginine 38 contributes to the NADP(+) binding site. NAD(+) is bound by residues 101 to 103 and 125 to 128; these read GTT and APNM. The Proton donor/acceptor role is filled by histidine 158. Histidine 159 contributes to the (S)-2,3,4,5-tetrahydrodipicolinate binding site. The active-site Proton donor is lysine 162. Position 168-169 (168-169) interacts with (S)-2,3,4,5-tetrahydrodipicolinate; it reads GT.

This sequence belongs to the DapB family.

The protein resides in the cytoplasm. The enzyme catalyses (S)-2,3,4,5-tetrahydrodipicolinate + NAD(+) + H2O = (2S,4S)-4-hydroxy-2,3,4,5-tetrahydrodipicolinate + NADH + H(+). It carries out the reaction (S)-2,3,4,5-tetrahydrodipicolinate + NADP(+) + H2O = (2S,4S)-4-hydroxy-2,3,4,5-tetrahydrodipicolinate + NADPH + H(+). It participates in amino-acid biosynthesis; L-lysine biosynthesis via DAP pathway; (S)-tetrahydrodipicolinate from L-aspartate: step 4/4. Catalyzes the conversion of 4-hydroxy-tetrahydrodipicolinate (HTPA) to tetrahydrodipicolinate. This chain is 4-hydroxy-tetrahydrodipicolinate reductase, found in Shewanella oneidensis (strain ATCC 700550 / JCM 31522 / CIP 106686 / LMG 19005 / NCIMB 14063 / MR-1).